We begin with the raw amino-acid sequence, 586 residues long: Beta-fructofuranosidase, insoluble isoenzyme 3 (586 aa).

Positions 1-26 (MATARARAALVFVALLQMAAVVVVRA) are cleaved as a signal peptide. Residue Asp61 is part of the active site. Residues Asn154, Asn179, Asn341, Asn390, and Asn479 are each glycosylated (N-linked (GlcNAc...) asparagine).

Belongs to the glycosyl hydrolase 32 family.

It is found in the secreted. The protein localises to the extracellular space. Its subcellular location is the apoplast. The protein resides in the cell wall. The enzyme catalyses Hydrolysis of terminal non-reducing beta-D-fructofuranoside residues in beta-D-fructofuranosides.. In Oryza sativa subsp. indica (Rice), this protein is Beta-fructofuranosidase, insoluble isoenzyme 3 (CIN3).